A 167-amino-acid polypeptide reads, in one-letter code: SsrA-binding protein (167 aa).

A compositionally biased stretch (basic and acidic residues) spans 139–158 (QNHDKRDAAKDRDWQRDKQR). A disordered region spans residues 139-167 (QNHDKRDAAKDRDWQRDKQRVMRRHNRDA).

It belongs to the SmpB family.

The protein resides in the cytoplasm. Functionally, required for rescue of stalled ribosomes mediated by trans-translation. Binds to transfer-messenger RNA (tmRNA), required for stable association of tmRNA with ribosomes. tmRNA and SmpB together mimic tRNA shape, replacing the anticodon stem-loop with SmpB. tmRNA is encoded by the ssrA gene; the 2 termini fold to resemble tRNA(Ala) and it encodes a 'tag peptide', a short internal open reading frame. During trans-translation Ala-aminoacylated tmRNA acts like a tRNA, entering the A-site of stalled ribosomes, displacing the stalled mRNA. The ribosome then switches to translate the ORF on the tmRNA; the nascent peptide is terminated with the 'tag peptide' encoded by the tmRNA and targeted for degradation. The ribosome is freed to recommence translation, which seems to be the essential function of trans-translation. This chain is SsrA-binding protein, found in Xanthomonas axonopodis pv. citri (strain 306).